The sequence spans 474 residues: UDP-N-acetylmuramate--L-alanine ligase (474 aa).

Residue 123–129 (GTHGKTT) coordinates ATP.

This sequence belongs to the MurCDEF family.

The protein localises to the cytoplasm. The catalysed reaction is UDP-N-acetyl-alpha-D-muramate + L-alanine + ATP = UDP-N-acetyl-alpha-D-muramoyl-L-alanine + ADP + phosphate + H(+). The protein operates within cell wall biogenesis; peptidoglycan biosynthesis. In terms of biological role, cell wall formation. The sequence is that of UDP-N-acetylmuramate--L-alanine ligase from Alcanivorax borkumensis (strain ATCC 700651 / DSM 11573 / NCIMB 13689 / SK2).